The sequence spans 982 residues: MIVLDIPKMDYGQIEIYNDYFRNVDKKTIKYTPMECIEYKLSYCAIYNDRELPIMIGSSLDISKENPLNLKGYFIIDGICKSVNNIKIKEKIHFSKDRAYLSDDSIIQIKDMFNMTIKNNKNTLKWNLPLNWSDIIKYSDHKKELENHLKIIDSFNKKAEKPIKNEIDLISLCYMFECWLGLREEPRLYYRLVTPGELIHDIIKEKRSVIKCFRTNTWTVKNIRNVFCVSEDMKHYNKIGDLESIRRITIPSSRSNAPMKERRVEDNDKYKICPIQTSDGSLCGTITYLCKDAKITTKIDTIIVEKADNGLHTFFNNTYLGKVKVKTKESDIYCIDKICYIFGNIGRIIKGNYLCSYTGELLDYKNYNPPIRSMFVCNMIKQAITGDSVYSGDILHNTKSLINGDLGHKLEIAIMPWKKFNIEDAIVISNKVSKLFRSKRTIIHRENDVKILNVYVNINQNITKGDLLYRTYDPMQVKTINFVYAEHDGKVKEIIREEKYLKLILIKERDLEVGDKMSSMHGQKGIVSLIENNMPYYYKNGEKVEIDLIINPHAFPSRMTLGQIKEMGEKEEYVYIEDTKLENKIIVGKCLYLALRHQVDDKVQFRNGGNIDIVTKQPVSGRKRSGGLRFGQMERDILIGLGAWNTIKEIWSIDRSKIKIDSKTGRINWIRYDKEMEIGQYFKICLSYMRSLGRDILIKNDKYSIVEFDNSYLPKTDTMKFGDLDVLDLRIYKGIVMLPLCLRSTYLNKLYVDRKYSEAEKEVTKLLKSKNGAYHTLVEGHRVDRCIRSVIVPDPTLDIDTIKIPFGANIGCEYGLLNRQPSLNVDSIKLVKLKQGSNKTIAINPLLCQSFNADFDGDEMNIYGIRNKESIEEMKILAKVIENKTQDYILDKKDLTANKKGILEMIEKGSKGKMFNFEHMFKEIGKVTINKKEINIKGCYNNSINDEEWYEMCKVARENAASISINTPITGYLENICNEMYL.

This sequence belongs to the RNA polymerase beta chain family.

The catalysed reaction is RNA(n) + a ribonucleoside 5'-triphosphate = RNA(n+1) + diphosphate. In terms of biological role, the presence of the two linear plasmids, termed pGKL1 and pGKL2, in strains of Kluyveromyces lactis confers the killer phenotype to the host cell, by promoting the secretion of a toxin able to inhibit the growth of sensitive strains. The sequence is that of Probable DNA-directed RNA polymerase from Kluyveromyces lactis (strain ATCC 8585 / CBS 2359 / DSM 70799 / NBRC 1267 / NRRL Y-1140 / WM37) (Yeast).